A 185-amino-acid chain; its full sequence is Stathmin-4 (185 aa).

Positions 48 to 185 (SDMEVIELNK…EVRKNKEATR (138 aa)) constitute an SLD domain. A coiled-coil region spans residues 90–185 (SLEEIQKKLE…EVRKNKEATR (96 aa)). The tract at residues 165 to 185 (ERLQEKDKHAEEVRKNKEATR) is disordered. Residues 166-185 (RLQEKDKHAEEVRKNKEATR) show a composition bias toward basic and acidic residues.

The protein belongs to the stathmin family. As to expression, nervous tissue.

The sequence is that of Stathmin-4 (stmn4) from Xenopus laevis (African clawed frog).